The sequence spans 340 residues: UDP-3-O-acylglucosamine N-acyltransferase (340 aa).

The Proton acceptor role is filled by histidine 238.

It belongs to the transferase hexapeptide repeat family. LpxD subfamily. As to quaternary structure, homotrimer.

The enzyme catalyses a UDP-3-O-[(3R)-3-hydroxyacyl]-alpha-D-glucosamine + a (3R)-hydroxyacyl-[ACP] = a UDP-2-N,3-O-bis[(3R)-3-hydroxyacyl]-alpha-D-glucosamine + holo-[ACP] + H(+). Its pathway is bacterial outer membrane biogenesis; LPS lipid A biosynthesis. Catalyzes the N-acylation of UDP-3-O-acylglucosamine using 3-hydroxyacyl-ACP as the acyl donor. Is involved in the biosynthesis of lipid A, a phosphorylated glycolipid that anchors the lipopolysaccharide to the outer membrane of the cell. The protein is UDP-3-O-acylglucosamine N-acyltransferase of Shewanella denitrificans (strain OS217 / ATCC BAA-1090 / DSM 15013).